The primary structure comprises 295 residues: Nucleotide-binding protein YjiE (295 aa).

Residue 12–19 (GMSGAGKT) coordinates ATP. 63–66 (DMRS) lines the GTP pocket.

Belongs to the RapZ-like family.

Its function is as follows. Displays ATPase and GTPase activities. This chain is Nucleotide-binding protein YjiE (yjiE), found in Lactococcus lactis subsp. lactis (strain IL1403) (Streptococcus lactis).